Here is a 101-residue protein sequence, read N- to C-terminus: Glutaredoxin-1 (101 aa).

Positions 5 to 101 (KDRVEKLIQT…GSLSKMIAAL (97 aa)) constitute a Glutaredoxin domain. A disulfide bridge connects residues C25 and C28.

It belongs to the glutaredoxin family.

The protein localises to the cytoplasm. Its subcellular location is the cytosol. In terms of biological role, multifunctional enzyme with glutathione-dependent oxidoreductase, glutathione peroxidase and glutathione S-transferase (GST) activity. The disulfide bond functions as an electron carrier in the glutathione-dependent synthesis of deoxyribonucleotides by the enzyme ribonucleotide reductase. In addition, it is also involved in reducing cytosolic protein- and non-protein-disulfides in a coupled system with glutathione reductase. May play a role in protection against oxidative stress caused by superoxide in vivo by regulating the redox state of the protein sulfhydryl groups. The polypeptide is Glutaredoxin-1 (Rhizophagus irregularis (strain DAOM 181602 / DAOM 197198 / MUCL 43194) (Arbuscular mycorrhizal fungus)).